The sequence spans 95 residues: Aspartyl/glutamyl-tRNA(Asn/Gln) amidotransferase subunit C (95 aa).

The protein belongs to the GatC family. In terms of assembly, heterotrimer of A, B and C subunits.

It carries out the reaction L-glutamyl-tRNA(Gln) + L-glutamine + ATP + H2O = L-glutaminyl-tRNA(Gln) + L-glutamate + ADP + phosphate + H(+). It catalyses the reaction L-aspartyl-tRNA(Asn) + L-glutamine + ATP + H2O = L-asparaginyl-tRNA(Asn) + L-glutamate + ADP + phosphate + 2 H(+). Allows the formation of correctly charged Asn-tRNA(Asn) or Gln-tRNA(Gln) through the transamidation of misacylated Asp-tRNA(Asn) or Glu-tRNA(Gln) in organisms which lack either or both of asparaginyl-tRNA or glutaminyl-tRNA synthetases. The reaction takes place in the presence of glutamine and ATP through an activated phospho-Asp-tRNA(Asn) or phospho-Glu-tRNA(Gln). The sequence is that of Aspartyl/glutamyl-tRNA(Asn/Gln) amidotransferase subunit C from Caulobacter sp. (strain K31).